Consider the following 289-residue polypeptide: 4-diphosphocytidyl-2-C-methyl-D-erythritol kinase (289 aa).

Residue Lys10 is part of the active site. 94-104 (PVAAGLAGGSS) lines the ATP pocket. Residue Asp136 is part of the active site.

The protein belongs to the GHMP kinase family. IspE subfamily.

The catalysed reaction is 4-CDP-2-C-methyl-D-erythritol + ATP = 4-CDP-2-C-methyl-D-erythritol 2-phosphate + ADP + H(+). The protein operates within isoprenoid biosynthesis; isopentenyl diphosphate biosynthesis via DXP pathway; isopentenyl diphosphate from 1-deoxy-D-xylulose 5-phosphate: step 3/6. Catalyzes the phosphorylation of the position 2 hydroxy group of 4-diphosphocytidyl-2C-methyl-D-erythritol. The polypeptide is 4-diphosphocytidyl-2-C-methyl-D-erythritol kinase (Bacillus cytotoxicus (strain DSM 22905 / CIP 110041 / 391-98 / NVH 391-98)).